A 357-amino-acid chain; its full sequence is MIVLGIETSCDETGVALYNTTPWGEGKPAFQGILGQGLHSQIAMHRDYGGVVPELASRDHIRRVLPLLDQSLAQSSLKLTDIDAVAFTQGPGLAGALLVGSAFAKSLAQGLNLPSIGVHHLEGHLLSPLLGQTAPQFPFIALLVSGGHTQLMKVSGIGHYELLGETLDDAAGEAFDKTAKLLGLDYPGGAAISKLAEQGRSGIFDLPKPMLHSGDLDFSFSGLKTAVLNQVKKFEEKKIAISSEIAQFHADLARSFVNAIVAVLVSKSEKALKQTGCKHLVLAGGVGANLQLRSALNEKATRNNFEVHYPPLELCTDNGVMIAFAGALRMLAKNNGSTTSGAFDIKPRWDLQSNNLV.

Positions 120 and 124 each coordinate Fe cation. Substrate-binding positions include 143-147 (LVSGG), aspartate 176, glycine 189, and asparagine 289. Residue aspartate 317 participates in Fe cation binding.

It belongs to the KAE1 / TsaD family. Fe(2+) is required as a cofactor.

The protein localises to the cytoplasm. It carries out the reaction L-threonylcarbamoyladenylate + adenosine(37) in tRNA = N(6)-L-threonylcarbamoyladenosine(37) in tRNA + AMP + H(+). Required for the formation of a threonylcarbamoyl group on adenosine at position 37 (t(6)A37) in tRNAs that read codons beginning with adenine. Is involved in the transfer of the threonylcarbamoyl moiety of threonylcarbamoyl-AMP (TC-AMP) to the N6 group of A37, together with TsaE and TsaB. TsaD likely plays a direct catalytic role in this reaction. The chain is tRNA N6-adenosine threonylcarbamoyltransferase from Polynucleobacter necessarius subsp. necessarius (strain STIR1).